The primary structure comprises 641 residues: Chaperone protein DnaK (641 aa).

The residue at position 200 (Thr-200) is a Phosphothreonine; by autocatalysis. Residues 606–623 (AEQGGNADAASGNAQASK) show a composition bias toward low complexity. A disordered region spans residues 606–628 (AEQGGNADAASGNAQASKAADDV).

The protein belongs to the heat shock protein 70 family.

In terms of biological role, acts as a chaperone. This is Chaperone protein DnaK from Xanthomonas axonopodis pv. citri (strain 306).